The chain runs to 393 residues: CCA-adding enzyme (393 aa).

Gly-27 and Arg-30 together coordinate ATP. CTP contacts are provided by Gly-27 and Arg-30. Residues Asp-40 and Asp-42 each coordinate Mg(2+). Arg-111, Asp-154, Arg-157, Arg-160, and Arg-163 together coordinate ATP. CTP-binding residues include Arg-111, Asp-154, Arg-157, Arg-160, and Arg-163.

It belongs to the tRNA nucleotidyltransferase/poly(A) polymerase family. Bacterial CCA-adding enzyme type 3 subfamily. As to quaternary structure, homodimer. It depends on Mg(2+) as a cofactor.

The enzyme catalyses a tRNA precursor + 2 CTP + ATP = a tRNA with a 3' CCA end + 3 diphosphate. It catalyses the reaction a tRNA with a 3' CCA end + 2 CTP + ATP = a tRNA with a 3' CCACCA end + 3 diphosphate. In terms of biological role, catalyzes the addition and repair of the essential 3'-terminal CCA sequence in tRNAs without using a nucleic acid template. Adds these three nucleotides in the order of C, C, and A to the tRNA nucleotide-73, using CTP and ATP as substrates and producing inorganic pyrophosphate. tRNA 3'-terminal CCA addition is required both for tRNA processing and repair. Also involved in tRNA surveillance by mediating tandem CCA addition to generate a CCACCA at the 3' terminus of unstable tRNAs. While stable tRNAs receive only 3'-terminal CCA, unstable tRNAs are marked with CCACCA and rapidly degraded. The protein is CCA-adding enzyme of Listeria innocua serovar 6a (strain ATCC BAA-680 / CLIP 11262).